The chain runs to 284 residues: UPF0294 protein VV2535 (284 aa).

It belongs to the UPF0294 family.

The protein localises to the cytoplasm. In Vibrio vulnificus (strain YJ016), this protein is UPF0294 protein VV2535.